The chain runs to 861 residues: Putative glutamate--cysteine ligase 2-2 (861 aa).

Positions 1 to 372 (MSDARIVAVG…RDVPPAGAAA (372 aa)) are carboxylate-amine ligase. The unknown stretch occupies residues 373-861 (ALGSAPAVSA…GSKDTWIPRR (489 aa)).

This sequence in the N-terminal section; belongs to the glutamate--cysteine ligase type 2 family. YbdK subfamily.

It catalyses the reaction L-cysteine + L-glutamate + ATP = gamma-L-glutamyl-L-cysteine + ADP + phosphate + H(+). In terms of biological role, ATP-dependent carboxylate-amine ligase which exhibits weak glutamate--cysteine ligase activity. The sequence is that of Putative glutamate--cysteine ligase 2-2 from Frankia casuarinae (strain DSM 45818 / CECT 9043 / HFP020203 / CcI3).